Here is a 189-residue protein sequence, read N- to C-terminus: Peptidyl-tRNA hydrolase (189 aa).

Position 15 (tyrosine 15) interacts with tRNA. The active-site Proton acceptor is the histidine 20. Residues phenylalanine 66, asparagine 68, and asparagine 114 each coordinate tRNA.

It belongs to the PTH family. Monomer.

Its subcellular location is the cytoplasm. The enzyme catalyses an N-acyl-L-alpha-aminoacyl-tRNA + H2O = an N-acyl-L-amino acid + a tRNA + H(+). Its function is as follows. Hydrolyzes ribosome-free peptidyl-tRNAs (with 1 or more amino acids incorporated), which drop off the ribosome during protein synthesis, or as a result of ribosome stalling. In terms of biological role, catalyzes the release of premature peptidyl moieties from peptidyl-tRNA molecules trapped in stalled 50S ribosomal subunits, and thus maintains levels of free tRNAs and 50S ribosomes. The protein is Peptidyl-tRNA hydrolase of Streptococcus equi subsp. zooepidemicus (strain H70).